Consider the following 264-residue polypeptide: Tryptophan synthase alpha chain (264 aa).

Residues glutamate 49 and aspartate 60 each act as proton acceptor in the active site.

It belongs to the TrpA family. As to quaternary structure, tetramer of two alpha and two beta chains.

It catalyses the reaction (1S,2R)-1-C-(indol-3-yl)glycerol 3-phosphate + L-serine = D-glyceraldehyde 3-phosphate + L-tryptophan + H2O. The protein operates within amino-acid biosynthesis; L-tryptophan biosynthesis; L-tryptophan from chorismate: step 5/5. Its function is as follows. The alpha subunit is responsible for the aldol cleavage of indoleglycerol phosphate to indole and glyceraldehyde 3-phosphate. The protein is Tryptophan synthase alpha chain of Synechocystis sp. (strain ATCC 27184 / PCC 6803 / Kazusa).